The chain runs to 356 residues: Homoserine O-succinyltransferase (356 aa).

Residue cysteine 146 is the Acyl-thioester intermediate of the active site. Residues lysine 167 and serine 196 each contribute to the substrate site. Histidine 239 serves as the catalytic Proton acceptor. The active site involves glutamate 241. Residue arginine 253 coordinates substrate.

The protein belongs to the MetA family.

It localises to the cytoplasm. It carries out the reaction L-homoserine + succinyl-CoA = O-succinyl-L-homoserine + CoA. The protein operates within amino-acid biosynthesis; L-methionine biosynthesis via de novo pathway; O-succinyl-L-homoserine from L-homoserine: step 1/1. Its function is as follows. Transfers a succinyl group from succinyl-CoA to L-homoserine, forming succinyl-L-homoserine. This chain is Homoserine O-succinyltransferase, found in Thioalkalivibrio nitratireducens (strain DSM 14787 / UNIQEM 213 / ALEN2).